Consider the following 200-residue polypeptide: WASH complex subunit 3 (200 aa).

Residues 56 to 76 (SLRIQQIETTLSILEAKLASI) are a coiled coil. Disordered regions lie at residues 87 to 130 (VRAP…AENI) and 165 to 200 (DPNL…SFSD).

It belongs to the CCDC53 family. As to quaternary structure, component of the WASH complex.

The chain is WASH complex subunit 3 from Danio rerio (Zebrafish).